Consider the following 508-residue polypeptide: Photosystem II CP47 reaction center protein (508 aa).

6 helical membrane passes run 21 to 36 (AVHI…WAGS), 101 to 115 (IVFS…IWHW), 140 to 156 (GIHL…FGAF), 203 to 218 (IAAG…FHLS), 237 to 252 (VLSS…AFVV), and 457 to 472 (SFAL…HGSR).

Belongs to the PsbB/PsbC family. PsbB subfamily. PSII is composed of 1 copy each of membrane proteins PsbA, PsbB, PsbC, PsbD, PsbE, PsbF, PsbH, PsbI, PsbJ, PsbK, PsbL, PsbM, PsbT, PsbX, PsbY, PsbZ, Psb30/Ycf12, at least 3 peripheral proteins of the oxygen-evolving complex and a large number of cofactors. It forms dimeric complexes. It depends on Binds multiple chlorophylls. PSII binds additional chlorophylls, carotenoids and specific lipids. as a cofactor.

The protein localises to the plastid. It is found in the chloroplast thylakoid membrane. In terms of biological role, one of the components of the core complex of photosystem II (PSII). It binds chlorophyll and helps catalyze the primary light-induced photochemical processes of PSII. PSII is a light-driven water:plastoquinone oxidoreductase, using light energy to abstract electrons from H(2)O, generating O(2) and a proton gradient subsequently used for ATP formation. This Populus trichocarpa (Western balsam poplar) protein is Photosystem II CP47 reaction center protein.